Consider the following 201-residue polypeptide: Glutathione peroxidase 1 (201 aa).

Residue serine 32 is modified to Phosphoserine. The active site involves selenocysteine 47. Residue selenocysteine 47 is a non-standard amino acid, selenocysteine. Residues lysine 86, lysine 112, and lysine 146 each carry the N6-acetyllysine; alternate modification. An N6-succinyllysine; alternate mark is found at lysine 86, lysine 112, and lysine 146. 2 positions are modified to phosphoserine: serine 195 and serine 199.

The protein belongs to the glutathione peroxidase family. As to quaternary structure, homotetramer. Interacts with MIEN1. Post-translationally, during periods of oxidative stress, Sec-47 may react with a superoxide radical, irreversibly lose hydroselenide and be converted to dehydroalanine.

It localises to the cytoplasm. The protein resides in the mitochondrion. It carries out the reaction 2 glutathione + H2O2 = glutathione disulfide + 2 H2O. The catalysed reaction is a hydroperoxy polyunsaturated fatty acid + 2 glutathione = a hydroxy polyunsaturated fatty acid + glutathione disulfide + H2O. The enzyme catalyses tert-butyl hydroperoxide + 2 glutathione = tert-butanol + glutathione disulfide + H2O. It catalyses the reaction cumene hydroperoxide + 2 glutathione = 2-phenylpropan-2-ol + glutathione disulfide + H2O. It carries out the reaction (13S)-hydroperoxy-(9Z,11E)-octadecadienoate + 2 glutathione = (13S)-hydroxy-(9Z,11E)-octadecadienoate + glutathione disulfide + H2O. The catalysed reaction is (9S)-hydroperoxy-(10E,12Z)-octadecadienoate + 2 glutathione = (9S)-hydroxy-(10E,12Z)-octadecadienoate + glutathione disulfide + H2O. The enzyme catalyses (5S)-hydroperoxy-(6E,8Z,11Z,14Z)-eicosatetraenoate + 2 glutathione = (5S)-hydroxy-(6E,8Z,11Z,14Z)-eicosatetraenoate + glutathione disulfide + H2O. It catalyses the reaction (12S)-hydroperoxy-(5Z,8Z,10E,14Z)-eicosatetraenoate + 2 glutathione = (12S)-hydroxy-(5Z,8Z,10E,14Z)-eicosatetraenoate + glutathione disulfide + H2O. It carries out the reaction (12R)-hydroperoxy-(5Z,8Z,10E,14Z)-eicosatetraenoate + 2 glutathione = (12R)-hydroxy-(5Z,8Z,10E,14Z)-eicosatetraenoate + glutathione disulfide + H2O. The catalysed reaction is (15S)-hydroperoxy-(5Z,8Z,11Z,13E)-eicosatetraenoate + 2 glutathione = (15S)-hydroxy-(5Z,8Z,11Z,13E)-eicosatetraenoate + glutathione disulfide + H2O. The enzyme catalyses (5S)-hydroperoxy-(6E,8Z,11Z,14Z,17Z)-eicosapentaenoate + 2 glutathione = (5S)-hydroxy-(6E,8Z,11Z,14Z,17Z)-eicosapentaenoate + glutathione disulfide + H2O. It catalyses the reaction (12S)-hydroperoxy-(5Z,8Z,10E,14Z,17Z)-eicosapentaenoate + 2 glutathione = (12S)-hydroxy-(5Z,8Z,10E,14Z,17Z)-eicosapentaenoate + glutathione disulfide + H2O. It carries out the reaction (15S)-hydroperoxy-(5Z,8Z,11Z,13E,17Z)-eicosapentaenoate + 2 glutathione = (15S)-hydroxy-(5Z,8Z,11Z,13E,17Z)-eicosapentaenoate + glutathione disulfide + H2O. The catalysed reaction is (15S)-hydroperoxy-(11Z,13E)-eicosadienoate + 2 glutathione = (15S)-hydroxy-(11Z,13E)-eicosadienoate + glutathione disulfide + H2O. The enzyme catalyses (17S)-hydroperoxy-(4Z,7Z,10Z,13Z,15E,19Z)-docosahexaenoate + 2 glutathione = (17S)-hydroxy-(4Z,7Z,10Z,13Z,15E,19Z)-docosahexaenoate + glutathione disulfide + H2O. In terms of biological role, catalyzes the reduction of hydroperoxides in a glutathione-dependent manner thus regulating cellular redox homeostasis. Can reduce small soluble hydroperoxides such as H2O2, cumene hydroperoxide and tert-butyl hydroperoxide, as well as several fatty acid-derived hydroperoxides. In platelets catalyzes the reduction of 12-hydroperoxyeicosatetraenoic acid, the primary product of the arachidonate 12-lipoxygenase pathway. This Pan troglodytes (Chimpanzee) protein is Glutathione peroxidase 1 (GPX1).